A 586-amino-acid chain; its full sequence is UvrABC system protein C (586 aa).

Residues histidine 17–leucine 94 form the GIY-YIG domain. Residues glutamate 201–leucine 236 enclose the UVR domain.

The protein belongs to the UvrC family. As to quaternary structure, interacts with UvrB in an incision complex.

The protein resides in the cytoplasm. In terms of biological role, the UvrABC repair system catalyzes the recognition and processing of DNA lesions. UvrC both incises the 5' and 3' sides of the lesion. The N-terminal half is responsible for the 3' incision and the C-terminal half is responsible for the 5' incision. The sequence is that of UvrABC system protein C from Mycoplasma pneumoniae (strain ATCC 29342 / M129 / Subtype 1) (Mycoplasmoides pneumoniae).